The chain runs to 122 residues: MIQPQTLLNVADNSGAQKLMCIRIIGTGNHRYAHLGDVIVAVIKEAVPNMPLERSEIIRAVIVRTCKELKRDNGMIIRYDDNAAVIIDQEGNPKGTRIFGAIARELRQLNFTKIVSLAPEVL.

The protein belongs to the universal ribosomal protein uL14 family. Part of the 50S ribosomal subunit.

It localises to the plastid. The protein resides in the chloroplast. Binds to 23S rRNA. The chain is Large ribosomal subunit protein uL14c from Phalaenopsis aphrodite subsp. formosana (Moth orchid).